Consider the following 99-residue polypeptide: UPF0386 protein mll0189 (99 aa).

The protein belongs to the UPF0386 family.

This chain is UPF0386 protein mll0189, found in Mesorhizobium japonicum (strain LMG 29417 / CECT 9101 / MAFF 303099) (Mesorhizobium loti (strain MAFF 303099)).